A 122-amino-acid chain; its full sequence is Large ribosomal subunit protein uL14 (122 aa).

Belongs to the universal ribosomal protein uL14 family. Part of the 50S ribosomal subunit. Forms a cluster with proteins L3 and L19. In the 70S ribosome, L14 and L19 interact and together make contacts with the 16S rRNA in bridges B5 and B8.

Binds to 23S rRNA. Forms part of two intersubunit bridges in the 70S ribosome. This chain is Large ribosomal subunit protein uL14, found in Thermosynechococcus vestitus (strain NIES-2133 / IAM M-273 / BP-1).